The primary structure comprises 103 residues: Large ribosomal subunit protein bL21 (103 aa).

It belongs to the bacterial ribosomal protein bL21 family. As to quaternary structure, part of the 50S ribosomal subunit. Contacts protein L20.

This protein binds to 23S rRNA in the presence of protein L20. This chain is Large ribosomal subunit protein bL21, found in Pseudomonas syringae pv. tomato (strain ATCC BAA-871 / DC3000).